The primary structure comprises 136 residues: MEEELLSAVPCSSLTVESVLRVATAGGLYGLCAGPRDARKIGLSGVSQASFVAKSIGRFGFQCGLVSGVFTMTHCGLQRYRGKNDWVNALVGGAVAGAAVAISTRNWTQVVGMAGLVSAFSVLANCTRTENPNNTN.

Residues M1 to F59 form a contains 4 beta strands region. 4 consecutive transmembrane segments (helical) span residues S18–G34, I56–M72, W86–I102, and V110–C126.

This sequence belongs to the Tim17/Tim22/Tim23 family. Plastid outer envelope porin OEP16 (TC 1.B.30) subfamily. Homodimer and oligomers in membrane.

The protein localises to the plastid. The protein resides in the chloroplast outer membrane. Voltage-dependent high-conductance channel with a slight cation-selectivity; selective for amino acids but excludes triosephosphates or uncharged sugars. Non-essential amino acid-selective channel protein and translocation pore for NADPH:protochlorophyllide oxidoreductase A (PORA) and possibly PORB. This chain is Outer envelope pore protein 16-4, chloroplastic (OEP164), found in Arabidopsis thaliana (Mouse-ear cress).